The chain runs to 132 residues: Large ribosomal subunit protein bL17 (132 aa).

Belongs to the bacterial ribosomal protein bL17 family. As to quaternary structure, part of the 50S ribosomal subunit. Contacts protein L32.

This chain is Large ribosomal subunit protein bL17, found in Leptothrix cholodnii (strain ATCC 51168 / LMG 8142 / SP-6) (Leptothrix discophora (strain SP-6)).